The following is a 37-amino-acid chain: Cytochrome b6-f complex subunit 5 (37 aa).

Residues 5–25 (LLSGIVLGLITVSALGLFVAA) traverse the membrane as a helical segment.

It belongs to the PetG family. As to quaternary structure, the 4 large subunits of the cytochrome b6-f complex are cytochrome b6, subunit IV (17 kDa polypeptide, PetD), cytochrome f and the Rieske protein, while the 4 small subunits are PetG, PetL, PetM and PetN. The complex functions as a dimer.

The protein localises to the plastid. It localises to the chloroplast thylakoid membrane. In terms of biological role, component of the cytochrome b6-f complex, which mediates electron transfer between photosystem II (PSII) and photosystem I (PSI), cyclic electron flow around PSI, and state transitions. PetG is required for either the stability or assembly of the cytochrome b6-f complex. This Phaeodactylum tricornutum (strain CCAP 1055/1) protein is Cytochrome b6-f complex subunit 5.